The following is a 447-amino-acid chain: Probable arabinosyltransferase ARAD1 (447 aa).

Residues 1–6 (MARKSS) lie on the Cytoplasmic side of the membrane. The chain crosses the membrane as a helical; Signal-anchor for type II membrane protein span at residues 7 to 29 (LLKRAAIAVVSVIAIYVILNASV). Topologically, residues 30-447 (SRSLPSSSDL…TNQTGLITSI (418 aa)) are lumenal. Residues 32–41 (SLPSSSDLPR) are compositionally biased toward low complexity. A disordered region spans residues 32–52 (SLPSSSDLPRQLIREDDDDEG). N-linked (GlcNAc...) asparagine glycosylation is found at N427, N432, and N439.

It belongs to the glycosyltransferase 47 family. As to quaternary structure, homodimer and heterodimer with ARAD2. Expressed in root vasculature, cotyledons, leaves, stems, vascular tissue of sepals, petals and stamens, pollen grains, mature siliques and abscission region of seeds.

The protein localises to the golgi apparatus membrane. In terms of biological role, probable arabinosyl transferase responsible for the polymerization of arabinose into the arabinan of arabinogalactan. May function as inverting enzyme using UDP-beta-L-arabinopyranoside. May be important for arabinan side chains of rhamnogalacturonan I (RG-I), a major component of pectins. Cell wall pectic arabinans are involved in thigmomorphogenesis response of inflorescence stems to mechanical stress. The protein is Probable arabinosyltransferase ARAD1 (ARAD1) of Arabidopsis thaliana (Mouse-ear cress).